Here is a 94-residue protein sequence, read N- to C-terminus: ESAT-6-like protein EsxI (94 aa).

The protein belongs to the WXG100 family. ESAT-6 subfamily.

The protein resides in the secreted. The protein is ESAT-6-like protein EsxI of Mycobacterium tuberculosis (strain CDC 1551 / Oshkosh).